A 268-amino-acid polypeptide reads, in one-letter code: FKBP-type peptidyl-prolyl cis-trans isomerase FkpA (268 aa).

A signal peptide spans 1–20 (MNNFLKVSLLAAAVAVSLTA). Positions 172–257 (TDIVKVHYTG…VFDVELLAIE (86 aa)) constitute a PPIase FKBP-type domain.

The protein belongs to the FKBP-type PPIase family.

The protein localises to the periplasm. The catalysed reaction is [protein]-peptidylproline (omega=180) = [protein]-peptidylproline (omega=0). Functionally, PPIases accelerate the folding of proteins. It catalyzes the cis-trans isomerization of proline imidic peptide bonds in oligopeptides. FkpA probably acts in the folding of extracytoplasmic proteins. The polypeptide is FKBP-type peptidyl-prolyl cis-trans isomerase FkpA (fkpA) (Aeromonas hydrophila).